The chain runs to 509 residues: Maturase K (509 aa).

It belongs to the intron maturase 2 family. MatK subfamily.

Its subcellular location is the plastid. In terms of biological role, usually encoded in the trnK tRNA gene intron. Probably assists in splicing its own and other chloroplast group II introns. In Cuscuta reflexa (Southern Asian dodder), this protein is Maturase K.